We begin with the raw amino-acid sequence, 379 residues long: Cytochrome b (379 aa).

The next 4 membrane-spanning stretches (helical) occupy residues 33 to 53 (FGSL…FLAM), 77 to 98 (WLIR…YLHI), 113 to 133 (WNIG…GYVL), and 178 to 198 (FFAF…IHLL). His83 and His97 together coordinate heme b. Residues His182 and His196 each contribute to the heme b site. His201 provides a ligand contact to a ubiquinone. A run of 4 helical transmembrane segments spans residues 226 to 246 (YKDL…ALFY), 288 to 308 (LGGV…PILH), 320 to 340 (ASQL…WIGG), and 347 to 367 (YIII…VLNP).

The protein belongs to the cytochrome b family. In terms of assembly, the cytochrome bc1 complex contains 3 respiratory subunits (MT-CYB, CYC1 and UQCRFS1), 2 core proteins (UQCRC1 and UQCRC2) and probably 6 low-molecular weight proteins. Heme b serves as cofactor.

The protein localises to the mitochondrion inner membrane. Functionally, component of the ubiquinol-cytochrome c reductase complex (complex III or cytochrome b-c1 complex) that is part of the mitochondrial respiratory chain. The b-c1 complex mediates electron transfer from ubiquinol to cytochrome c. Contributes to the generation of a proton gradient across the mitochondrial membrane that is then used for ATP synthesis. The sequence is that of Cytochrome b (mt-cyb) from Anguilla reinhardtii (Speckled longfin eel).